The chain runs to 335 residues: MHTAYVPVPAPVRPPSAERWPLAAVAELFELPFLDLLHRAQQVHRQHFDANTVQLSSLLSIKTGGCPEDCAYCPQSAHYDTGVDADKLMPLDEVVRAARAAQANGAQRFCMGAAWRSPKPHHLEAVAEMIGAVKALGMETCVTLGMLRDGQAEQLKAAGLDYYNHNLDTAPEFYGKIISTRTYQDRLDTLQQVREAGINVCCGGIVGMGESRRDRAGLVAQLTNMEPYPESVPINNLVQVEGTPLAGAETLDPFEFIRTIAVARITMPLAKVRLSAGRETMSDSEQALCFMAGANSIFYGDVLLTTGNPQVEADRRLLQRLGMRAEGLPCAAGQA.

Residues 51–278 (NTVQLSSLLS…LAKVRLSAGR (228 aa)) enclose the Radical SAM core domain. [4Fe-4S] cluster contacts are provided by cysteine 66, cysteine 70, and cysteine 73. [2Fe-2S] cluster-binding residues include cysteine 110, cysteine 141, cysteine 201, and arginine 273.

The protein belongs to the radical SAM superfamily. Biotin synthase family. In terms of assembly, homodimer. [4Fe-4S] cluster serves as cofactor. [2Fe-2S] cluster is required as a cofactor.

It catalyses the reaction (4R,5S)-dethiobiotin + (sulfur carrier)-SH + 2 reduced [2Fe-2S]-[ferredoxin] + 2 S-adenosyl-L-methionine = (sulfur carrier)-H + biotin + 2 5'-deoxyadenosine + 2 L-methionine + 2 oxidized [2Fe-2S]-[ferredoxin]. It participates in cofactor biosynthesis; biotin biosynthesis; biotin from 7,8-diaminononanoate: step 2/2. Functionally, catalyzes the conversion of dethiobiotin (DTB) to biotin by the insertion of a sulfur atom into dethiobiotin via a radical-based mechanism. The polypeptide is Biotin synthase (Bordetella pertussis (strain Tohama I / ATCC BAA-589 / NCTC 13251)).